A 438-amino-acid polypeptide reads, in one-letter code: Gamma-glutamyl phosphate reductase (438 aa).

This sequence belongs to the gamma-glutamyl phosphate reductase family.

It localises to the cytoplasm. It catalyses the reaction L-glutamate 5-semialdehyde + phosphate + NADP(+) = L-glutamyl 5-phosphate + NADPH + H(+). It participates in amino-acid biosynthesis; L-proline biosynthesis; L-glutamate 5-semialdehyde from L-glutamate: step 2/2. Functionally, catalyzes the NADPH-dependent reduction of L-glutamate 5-phosphate into L-glutamate 5-semialdehyde and phosphate. The product spontaneously undergoes cyclization to form 1-pyrroline-5-carboxylate. In Prochlorococcus marinus (strain NATL2A), this protein is Gamma-glutamyl phosphate reductase.